The chain runs to 553 residues: MAAVSLRLGDLVWGKLGRYPPWPGKIVNPPKDLKKPRGKKCFFVKFFGTEDHAWIKVEQLKPYHAHKEEMIKINKGKRFQQAVDAVEEFLRRAKGKDQTSSHNSSDDKNRRNSSEERSRPNSGDEKRKLSLSEGKVKKNMGEGKKRVSSGSSERGSKSPLKRAQEQSPRKRGRPPKDEKDLTIPESSTVKGMMAGPMAAFKWQPTATEPVKDADPHFHHFLLSQTEKPAVCYQAITKKLKICEEETGSTSIQAADSTAVNGSITPTDKKIGFLGLGLMGSGIVSNLLKMGHTVTVWDRTAEKCDLFIQEGARLGRTPAEVVSTCDITFACVSDPKAAKDLVLGPSGVLQGIRPRKCYVDMSTVDADTVTELAQVIVSRGGRFLEAPVSGNQQLSNDGMLVILAAGDRGLYEDCSSCFQAMGKTSFFLGEVGNAAKMMLIVNMVQGSFMATIAEGLTLAQVTGQSQQTLLDILNQGQLASIFLDQKCQNILQGNFKPDFYLKYIQKDLRLAIALGDAVNHPTPMAAAANEVYKRAKALDQSDNDMSAVYRAYIH.

Residues 8 to 66 (LGDLVWGKLGRYPPWPGKIVNPPKDLKKPRGKKCFFVKFFGTEDHAWIKVEQLKPYHAH) enclose the PWWP domain. Basic and acidic residues-rich tracts occupy residues 92-145 (RAKG…EGKK) and 162-182 (RAQE…KDLT). A disordered region spans residues 92-188 (RAKGKDQTSS…KDLTIPESST (97 aa)). Phosphoserine is present on Ser-130. Lys-135 participates in a covalent cross-link: Glycyl lysine isopeptide (Lys-Gly) (interchain with G-Cter in SUMO2). Position 167 is a phosphoserine (Ser-167). Residues 168–180 (PRKRGRPPKDEKD) constitute a DNA-binding region (a.T hook). Glycyl lysine isopeptide (Lys-Gly) (interchain with G-Cter in SUMO2) cross-links involve residues Lys-176, Lys-179, Lys-201, and Lys-211. The tract at residues 214-217 (DPHF) is interaction with histone H3. The tract at residues 216–225 (HFHHFLLSQT) is interaction with KDM1B. Residues Lys-227, Lys-237, Lys-240, and Lys-269 each participate in a glycyl lysine isopeptide (Lys-Gly) (interchain with G-Cter in SUMO2) cross-link. The dehydrogenase domain stretch occupies residues 261–553 (GSITPTDKKI…MSAVYRAYIH (293 aa)). NAD(+) is bound at residue 271-285 (GFLGLGLMGSGIVSN). Lys-302 participates in a covalent cross-link: Glycyl lysine isopeptide (Lys-Gly) (interchain with G-Cter in SUMO2). NAD(+) contacts are provided by Thr-362 and Lys-505. Phosphoserine is present on Ser-540.

This sequence belongs to the HIBADH-related family. NP60 subfamily. As to quaternary structure, homotetramere. Interacts with MAPK14. Interacts with KDM1B at nucleosomes; this interaction stimulates H3K4me1 and H3K4me2 demethylation. Binds to mononucleosomes. Interacts with GATA4; the interaction is required for a synergistic activation of GATA4 target genes transcription.

It localises to the nucleus. The protein resides in the chromosome. Its function is as follows. Cytokine-like nuclear factor with chromatin gene reader activity involved in chromatin modification and regulation of gene expression. Acts as a nucleosome-destabilizing factor that is recruited to genes during transcriptional activation. Recognizes and binds histone H3 without a preference for specific epigenetic markers and also binds DNA. Interacts with KDM1B and promotes its histone demethylase activity by facilitating the capture of H3 tails, they form a multifunctional enzyme complex that modifies transcribed chromatin and facilitates Pol II transcription through nucleosomes. Stimulates the acetylation of 'Lys-56' of nucleosomal histone H3 (H3K56ac) by EP300. With GATA4, co-binds a defined set of heart development genes and coregulates their expression during cardiomyocyte differentiation. Regulates p38 MAP kinase activity by mediating stress activation of MAPK14/p38alpha and specifically regulating MAPK14 signaling. Indirectly promotes phosphorylation of MAPK14 and activation of ATF2. The phosphorylation of MAPK14 requires upstream activity of MAP2K4 and MAP2K6. This chain is Cytokine-like nuclear factor N-PAC (GLYR1), found in Pongo abelii (Sumatran orangutan).